The sequence spans 789 residues: SH3 domain-containing protein 19 (789 aa).

Disordered stretches follow at residues 24 to 170 (TNTE…PPRL), 209 to 404 (DDDV…RPKP), and 472 to 497 (TPLD…SGAP). At Ser65 the chain carries Phosphoserine. The span at 296-305 (SHSDRTRNPE) shows a compositional bias: basic and acidic residues. Residues 335–351 (WRPPPKGAPERPPPPKL) are compositionally biased toward pro residues. The segment covering 352-361 (PASKSSNKNL) has biased composition (low complexity). A Phosphoserine modification is found at Ser368. 5 consecutive SH3 domains span residues 414–476 (LSVP…PLDE), 494–553 (SGAP…VIVD), 570–629 (AKGP…LVGD), 660–719 (PPGE…PCPA), and 729–788 (PKGR…FLQV). Residues 474–484 (LDERPRGRPND) show a composition bias toward basic and acidic residues. A disordered region spans residues 635–663 (ANILSTKVPPKTKNEDPGSNSQDSSPPGE).

Interacts with ADAM12. Isoform 2 (but not isoform 1) interacts with ADAM9, ADAM10, ADAM15 and ADAM17. Interacts with SH3GL1 SH3 domain. Interacts via SH3 3 and SH3 4 or SH3 4 and SH3 5 domains with SOS2. Probably forms a trimeric complex with SH3GL1 and SOS2. Interacts with SH3YL1. In terms of tissue distribution, expressed in hair follicles.

The protein localises to the cytoplasm. Its function is as follows. May play a role in regulating A disintegrin and metalloproteases (ADAMs) in the signaling of EGFR-ligand shedding. May be involved in suppression of Ras-induced cellular transformation and Ras-mediated activation of ELK1. Plays a role in the regulation of cell morphology and cytoskeletal organization. This chain is SH3 domain-containing protein 19 (Sh3d19), found in Mus musculus (Mouse).